The primary structure comprises 178 residues: Caveolin-1 (178 aa).

At S2 the chain carries N-acetylserine. A Phosphoserine modification is found at S2. A required for homooligomerization region spans residues S2 to V94. Topologically, residues S2 to S104 are cytoplasmic. K5 is subject to N6-acetyllysine; alternate. A Glycyl lysine isopeptide (Lys-Gly) (interchain with G-Cter in ubiquitin); alternate cross-link involves residue K5. Residue Y6 is modified to Phosphotyrosine. Residue S9 is modified to Phosphoserine. Y14 carries the phosphotyrosine; by ABL1 modification. A Phosphotyrosine modification is found at Y25. Residues K26, K30, K39, K47, and K57 each participate in a glycyl lysine isopeptide (Lys-Gly) (interchain with G-Cter in ubiquitin) cross-link. The interval D82–V94 is interaction with CAVIN3. Residues T105–L125 constitute an intramembrane region (helical). Topologically, residues H126–I178 are cytoplasmic. The interacts with SPRY1, SPRY2, SPRY3 and SPRY4 stretch occupies residues V131–Q142. 3 S-palmitoyl cysteine lipidation sites follow: C133, C143, and C156. Residues S149–F160 are interacts with SPRY1, SPRY2, and SPRY4. Residues F167–I178 form an interacts with SPRY1, SPRY2, SPRY3 and SPRY4 region.

Belongs to the caveolin family. As to quaternary structure, homooligomer. Interacts with GLIPR2. Interacts with NOSTRIN. Interacts with SNAP25 and STX1A. Interacts (via the N-terminus) with DPP4; the interaction is direct. Interacts with CTNNB1, CDH1 and JUP. Interacts with PACSIN2; this interaction induces membrane tubulation. Interacts with SLC7A9. Interacts with BMX and BTK. Interacts with TGFBR1. Interacts with CAVIN3 (via leucine-zipper domain) in a cholesterol-sensitive manner. Interacts with CAVIN1. Interacts with EHD2 in a cholesterol-dependent manner. Forms a ternary complex with UBXN6 and VCP; mediates CAV1 targeting to lysosomes for degradation. Interacts with ABCG1; this interaction regulates ABCG1-mediated cholesterol efflux. Interacts with NEU3; this interaction enhances NEU3 sialidase activity within caveola. Interacts (via C-terminus) with SPRY1, SPRY2 (via C-terminus), SPRY3, and SPRY4. Interacts with IGFBP5; this interaction allows trafficking of IGFBP5 from the plasma membrane to the nucleus. In terms of processing, phosphorylated at Tyr-14 by ABL1 in response to oxidative stress. Ubiquitinated. Undergo monoubiquitination and multi- and/or polyubiquitination. Monoubiquitination of N-terminal lysines promotes integration in a ternary complex with UBXN6 and VCP which promotes oligomeric CAV1 targeting to lysosomes for degradation. Ubiquitinated by ZNRF1; leading to degradation and modulation of the TLR4-mediated immune response.

It is found in the golgi apparatus membrane. It localises to the cell membrane. The protein localises to the membrane. Its subcellular location is the caveola. The protein resides in the membrane raft. May act as a scaffolding protein within caveolar membranes. Forms a stable heterooligomeric complex with CAV2 that targets to lipid rafts and drives caveolae formation. Mediates the recruitment of CAVIN proteins (CAVIN1/2/3/4) to the caveolae. Interacts directly with G-protein alpha subunits and can functionally regulate their activity. Involved in the costimulatory signal essential for T-cell receptor (TCR)-mediated T-cell activation. Its binding to DPP4 induces T-cell proliferation and NF-kappa-B activation in a T-cell receptor/CD3-dependent manner. Recruits CTNNB1 to caveolar membranes and may regulate CTNNB1-mediated signaling through the Wnt pathway. Negatively regulates TGFB1-mediated activation of SMAD2/3 by mediating the internalization of TGFBR1 from membrane rafts leading to its subsequent degradation. Binds 20(S)-hydroxycholesterol (20(S)-OHC). The sequence is that of Caveolin-1 (CAV1) from Dasypus novemcinctus (Nine-banded armadillo).